Consider the following 286-residue polypeptide: NFU1 iron-sulfur cluster scaffold homolog, mitochondrial (286 aa).

A mitochondrion-targeting transit peptide spans 1-66 (MSKLLTNTAL…RQIQLSGARN (66 aa)). The interval 182-250 (IKELLDTRIR…IPEVESVEQV (69 aa)) is nifU. Cysteine 219 and cysteine 222 together coordinate [4Fe-4S] cluster.

The protein belongs to the NifU family.

It localises to the mitochondrion. Its function is as follows. Molecular scaffold for [Fe-S] cluster assembly of mitochondrial iron-sulfur proteins. The chain is NFU1 iron-sulfur cluster scaffold homolog, mitochondrial from Drosophila ananassae (Fruit fly).